Reading from the N-terminus, the 406-residue chain is 4-O-methyl-glucuronoyl methylesterase (406 aa).

The N-terminal stretch at 1–17 is a signal peptide; the sequence is MAFRWLSFLLLALPVLA. A disulfide bridge connects residues C31 and C64. 4 N-linked (GlcNAc...) asparagine glycosylation sites follow: N100, N110, N122, and N178. The short motif at 215–220 is the GXSYXG catalytic site motif element; the sequence is GCSRDG. Intrachain disulfides connect C216–C352 and C248–C324. Residue S217 is the Nucleophile of the active site. Residues K221, Q263, and E271 each coordinate substrate. N285 carries N-linked (GlcNAc...) asparagine glycosylation. W315 provides a ligand contact to substrate. N348 carries an N-linked (GlcNAc...) asparagine glycan. The Proton donor/acceptor role is filled by H351. N-linked (GlcNAc...) asparagine glycosylation is found at N376, N387, and N398.

The protein belongs to the carbohydrate esterase 15 (CE15) family.

The protein localises to the secreted. The catalysed reaction is a 4-O-methyl-alpha-D-glucuronosyl ester derivative + H2O = 4-O-methyl-alpha-D-glucuronate derivative + an alcohol + H(+). Glucuronoyl esterase which may play a significant role in biomass degradation, as it is considered to disconnect hemicellulose from lignin through the hydrolysis of the ester bond between 4-O-methyl-D-glucuronic acid residues of glucuronoxylans and aromatic alcohols of lignin. The chain is 4-O-methyl-glucuronoyl methylesterase from Phanerochaete carnosa (strain HHB-10118-sp) (White-rot fungus).